The following is a 398-amino-acid chain: Phosphopentomutase (398 aa).

6 residues coordinate Mn(2+): Asp-13, Asp-290, His-295, Asp-331, His-332, and His-343.

It belongs to the phosphopentomutase family. It depends on Mn(2+) as a cofactor.

Its subcellular location is the cytoplasm. The enzyme catalyses 2-deoxy-alpha-D-ribose 1-phosphate = 2-deoxy-D-ribose 5-phosphate. The catalysed reaction is alpha-D-ribose 1-phosphate = D-ribose 5-phosphate. The protein operates within carbohydrate degradation; 2-deoxy-D-ribose 1-phosphate degradation; D-glyceraldehyde 3-phosphate and acetaldehyde from 2-deoxy-alpha-D-ribose 1-phosphate: step 1/2. Isomerase that catalyzes the conversion of deoxy-ribose 1-phosphate (dRib-1-P) and ribose 1-phosphate (Rib-1-P) to deoxy-ribose 5-phosphate (dRib-5-P) and ribose 5-phosphate (Rib-5-P), respectively. The polypeptide is Phosphopentomutase (Clostridium tetani (strain Massachusetts / E88)).